The following is a 135-amino-acid chain: Protein PsiE homolog (135 aa).

The next 4 helical transmembrane spans lie at 14–34 (LQTILNIGLLVLATILVIFLV), 54–74 (YQLIEGIVIYFLYFEFIALIV), 82–102 (HFPLRYFIYIGITAIIRLIIV), and 107–127 (PSDTLMYSAAILLLVVTLYLA).

The protein belongs to the PsiE family.

It is found in the cell inner membrane. The polypeptide is Protein PsiE homolog (Pectobacterium carotovorum subsp. carotovorum (strain PC1)).